A 609-amino-acid chain; its full sequence is Protein tesmin/TSO1-like CXC 3 (609 aa).

The span at 69-84 (ESRFRSQKDVSASKEV) shows a compositional bias: basic and acidic residues. Disordered regions lie at residues 69–102 (ESRFRSQKDVSASKEVGEEEALVGSEPEQSYKND), 307–328 (PISPKKKRRKSEQSGEGDSSCK), 457–477 (LFEQDEENETSGTPGTKKTQQ), and 569–609 (NSKR…TPHH). The CRC domain occupies 326–451 (SCKRCNCKKS…RCEGCKNAFG (126 aa)). Residues 466–477 (TSGTPGTKKTQQ) are compositionally biased toward polar residues.

The protein belongs to the lin-54 family. Ubiquitous but expressed mostly in flowers and at significant levels in leaves. Detected with highest levels in developing ovules and microspores, and in petals.

Its subcellular location is the nucleus. Functionally, plays a role in development of both male and female reproductive tissues. The sequence is that of Protein tesmin/TSO1-like CXC 3 (TCX3) from Arabidopsis thaliana (Mouse-ear cress).